We begin with the raw amino-acid sequence, 717 residues long: uncharacterized protein (717 aa).

Residues 19–38 (VFLSTIFVSIIFCLGILFLV) form a helical membrane-spanning segment.

To E.coli YtfN.

The protein resides in the membrane. This is an uncharacterized protein from Buchnera aphidicola subsp. Baizongia pistaciae (strain Bp).